We begin with the raw amino-acid sequence, 319 residues long: V-set and transmembrane domain-containing protein 4 (319 aa).

Positions 1-23 (MRLRLLALAAAVLLGPAPEVCGA) are cleaved as a signal peptide. Residues 24–154 (LNVTVSPGPV…SSATEMRVIS (131 aa)) enclose the Ig-like domain. N-linked (GlcNAc...) asparagine glycosylation is found at asparagine 25 and asparagine 41. Residues cysteine 46 and cysteine 126 are joined by a disulfide bond. The N-linked (GlcNAc...) asparagine glycan is linked to asparagine 143. The chain crosses the membrane as a helical span at residues 180 to 200 (AVLVCCVGILSVLLFTLVIAW).

Post-translationally, proteolytically cleaved to generate a bioactive peptide. As to expression, peptide Lv is widely expressed in various tissues and the central nervous system, including the retinal photoreceptor layer, hippocampus, olfactory bulb, and cerebellum.

It localises to the cell membrane. The protein localises to the secreted. Functionally, peptide Lv enhances L-type voltage-gated calcium channel (L-VGCC) currents in retinal photoreceptors. The chain is V-set and transmembrane domain-containing protein 4 (Vstm4) from Mus musculus (Mouse).